A 565-amino-acid chain; its full sequence is Proline--tRNA ligase (565 aa).

The protein belongs to the class-II aminoacyl-tRNA synthetase family. ProS type 1 subfamily. Homodimer.

The protein resides in the cytoplasm. It carries out the reaction tRNA(Pro) + L-proline + ATP = L-prolyl-tRNA(Pro) + AMP + diphosphate. In terms of biological role, catalyzes the attachment of proline to tRNA(Pro) in a two-step reaction: proline is first activated by ATP to form Pro-AMP and then transferred to the acceptor end of tRNA(Pro). As ProRS can inadvertently accommodate and process non-cognate amino acids such as alanine and cysteine, to avoid such errors it has two additional distinct editing activities against alanine. One activity is designated as 'pretransfer' editing and involves the tRNA(Pro)-independent hydrolysis of activated Ala-AMP. The other activity is designated 'posttransfer' editing and involves deacylation of mischarged Ala-tRNA(Pro). The misacylated Cys-tRNA(Pro) is not edited by ProRS. This chain is Proline--tRNA ligase, found in Lactobacillus johnsonii (strain CNCM I-12250 / La1 / NCC 533).